The primary structure comprises 247 residues: UPF0273 protein PF1931 (247 aa).

The KaiC domain maps to 3-247; it reads RRVKTGIPGM…VLKRGRIYEL (245 aa). 30–37 contacts ATP; it reads GGPGTGKS.

This sequence belongs to the UPF0273 family.

The polypeptide is UPF0273 protein PF1931 (Pyrococcus furiosus (strain ATCC 43587 / DSM 3638 / JCM 8422 / Vc1)).